Reading from the N-terminus, the 309-residue chain is Ribonuclease Z (309 aa).

Residues His-63, His-65, Asp-67, His-68, His-145, Asp-216, and His-274 each contribute to the Zn(2+) site. The Proton acceptor role is filled by Asp-67.

It belongs to the RNase Z family. Homodimer. It depends on Zn(2+) as a cofactor.

It carries out the reaction Endonucleolytic cleavage of RNA, removing extra 3' nucleotides from tRNA precursor, generating 3' termini of tRNAs. A 3'-hydroxy group is left at the tRNA terminus and a 5'-phosphoryl group is left at the trailer molecule.. In terms of biological role, zinc phosphodiesterase, which displays some tRNA 3'-processing endonuclease activity. Probably involved in tRNA maturation, by removing a 3'-trailer from precursor tRNA. This chain is Ribonuclease Z, found in Streptococcus pneumoniae serotype 2 (strain D39 / NCTC 7466).